The chain runs to 181 residues: Trans-acting factor D (181 aa).

In terms of biological role, plays a role in 2-micron plasmid partitioning. Antagonizes transcriptional repression of recombinase FLP by REP1-REP2. Regulates both stability and copy number of the plasmid by blocking the formation of the REP1-REP2 repressor complex. This chain is Trans-acting factor D, found in Saccharomyces cerevisiae (strain ATCC 204508 / S288c) (Baker's yeast).